The chain runs to 444 residues: Argininosuccinate synthase (444 aa).

ATP contacts are provided by residues 18–26 and Ala-44; that span reads AFSGGLDTS. Residue Tyr-100 coordinates L-citrulline. Residues Gly-130 and Thr-132 each coordinate ATP. L-aspartate contacts are provided by Thr-132, Asn-136, and Asp-137. Asn-136 is an L-citrulline binding site. Asp-137 provides a ligand contact to ATP. Arg-140 and Ser-193 together coordinate L-citrulline. Asp-195 is a binding site for ATP. 3 residues coordinate L-citrulline: Thr-202, Glu-204, and Glu-281.

This sequence belongs to the argininosuccinate synthase family. Type 2 subfamily. Homotetramer.

Its subcellular location is the cytoplasm. The catalysed reaction is L-citrulline + L-aspartate + ATP = 2-(N(omega)-L-arginino)succinate + AMP + diphosphate + H(+). It functions in the pathway amino-acid biosynthesis; L-arginine biosynthesis; L-arginine from L-ornithine and carbamoyl phosphate: step 2/3. This chain is Argininosuccinate synthase, found in Haemophilus influenzae (strain PittGG).